The sequence spans 461 residues: Argininosuccinate lyase (461 aa).

The protein belongs to the lyase 1 family. Argininosuccinate lyase subfamily.

The protein localises to the cytoplasm. It catalyses the reaction 2-(N(omega)-L-arginino)succinate = fumarate + L-arginine. Its pathway is amino-acid biosynthesis; L-arginine biosynthesis; L-arginine from L-ornithine and carbamoyl phosphate: step 3/3. This is Argininosuccinate lyase from Limosilactobacillus reuteri subsp. reuteri (strain JCM 1112) (Lactobacillus reuteri).